A 135-amino-acid polypeptide reads, in one-letter code: NADPH-dependent 7-cyano-7-deazaguanine reductase (135 aa).

The active-site Thioimide intermediate is the Cys48. Residue Asp55 is the Proton donor of the active site. Residues 70–72 and 89–90 contribute to the substrate site; these read IEL and HE.

Belongs to the GTP cyclohydrolase I family. QueF type 1 subfamily.

Its subcellular location is the cytoplasm. It carries out the reaction 7-aminomethyl-7-carbaguanine + 2 NADP(+) = 7-cyano-7-deazaguanine + 2 NADPH + 3 H(+). The protein operates within tRNA modification; tRNA-queuosine biosynthesis. Functionally, catalyzes the NADPH-dependent reduction of 7-cyano-7-deazaguanine (preQ0) to 7-aminomethyl-7-deazaguanine (preQ1). In Prochlorococcus marinus (strain MIT 9303), this protein is NADPH-dependent 7-cyano-7-deazaguanine reductase.